The chain runs to 449 residues: Tubulin alpha-1C chain (449 aa).

The MREC motif signature appears at 1-4 (MREC). GTP is bound at residue glutamine 11. Residue lysine 40 is modified to N6-acetyllysine. GTP is bound by residues glutamate 71, serine 140, glycine 144, threonine 145, threonine 179, asparagine 206, and asparagine 228. Glutamate 71 is a binding site for Mg(2+). Glutamate 254 is a catalytic residue. A 3'-nitrotyrosine modification is found at tyrosine 282. Positions 429-449 (EKDYEEVGADSADGEDEGEEY) are disordered. A compositionally biased stretch (acidic residues) spans 431-449 (DYEEVGADSADGEDEGEEY). Tyrosine 432 carries the post-translational modification Phosphotyrosine. The residue at position 439 (serine 439) is a Phosphoserine. Tyrosine 449 carries the post-translational modification 3'-nitrotyrosine.

Belongs to the tubulin family. As to quaternary structure, dimer of alpha and beta chains. A typical microtubule is a hollow water-filled tube with an outer diameter of 25 nm and an inner diameter of 15 nM. Alpha-beta heterodimers associate head-to-tail to form protofilaments running lengthwise along the microtubule wall with the beta-tubulin subunit facing the microtubule plus end conferring a structural polarity. Microtubules usually have 13 protofilaments but different protofilament numbers can be found in some organisms and specialized cells. Mg(2+) serves as cofactor. In terms of processing, some glutamate residues at the C-terminus are polyglutamylated, resulting in polyglutamate chains on the gamma-carboxyl group. Polyglutamylation plays a key role in microtubule severing by spastin (SPAST). SPAST preferentially recognizes and acts on microtubules decorated with short polyglutamate tails: severing activity by SPAST increases as the number of glutamates per tubulin rises from one to eight, but decreases beyond this glutamylation threshold. Glutamylation is also involved in cilia motility. Some glutamate residues at the C-terminus are monoglycylated but not polyglycylated due to the absence of functional TTLL10 in human. Monoglycylation is mainly limited to tubulin incorporated into cilia and flagella axonemes, which is required for their stability and maintenance. Flagella glycylation controls sperm motility. Both polyglutamylation and monoglycylation can coexist on the same protein on adjacent residues, and lowering glycylation levels increases polyglutamylation, and reciprocally. Post-translationally, acetylation of alpha chains at Lys-40 is located inside the microtubule lumen. This modification has been correlated with increased microtubule stability, intracellular transport and ciliary assembly. In terms of processing, methylation of alpha chains at Lys-40 is found in mitotic microtubules and is required for normal mitosis and cytokinesis contributing to genomic stability. Nitration of Tyr-449 is irreversible and interferes with normal dynein intracellular distribution. Post-translationally, undergoes a tyrosination/detyrosination cycle, the cyclic removal and re-addition of a C-terminal tyrosine residue by the enzymes tubulin tyrosine carboxypeptidase (MATCAP1/KIAA0895L, VASH1 or VASH2) and tubulin tyrosine ligase (TTL), respectively. In terms of processing, tyrosination promotes microtubule interaction with CAP-Gly domain-containing proteins such as CLIP1, CLIP2 and DCTN1. Tyrosination regulates the initiation of dynein-dynactin motility via interaction with DCTN1, which brings the dynein-dynactin complex into contact with microtubules. In neurons, tyrosinated tubulins mediate the initiation of retrograde vesicle transport. Detyrosination is involved in metaphase plate congression by guiding chromosomes during mitosis: detyrosination promotes interaction with CENPE, promoting pole-proximal transport of chromosomes toward the equator. Detyrosination increases microtubules-dependent mechanotransduction in dystrophic cardiac and skeletal muscle. In cardiomyocytes, detyrosinated microtubules are required to resist to contractile compression during contraction: detyrosination promotes association with desmin (DES) at force-generating sarcomeres, leading to buckled microtubules and mechanical resistance to contraction.

It is found in the cytoplasm. It localises to the cytoskeleton. The enzyme catalyses GTP + H2O = GDP + phosphate + H(+). Its function is as follows. Tubulin is the major constituent of microtubules, a cylinder consisting of laterally associated linear protofilaments composed of alpha- and beta-tubulin heterodimers. Microtubules grow by the addition of GTP-tubulin dimers to the microtubule end, where a stabilizing cap forms. Below the cap, tubulin dimers are in GDP-bound state, owing to GTPase activity of alpha-tubulin. The sequence is that of Tubulin alpha-1C chain (TUBA1C) from Homo sapiens (Human).